We begin with the raw amino-acid sequence, 263 residues long: uncharacterized protein (263 aa).

Residues 1 to 22 form the signal peptide; that stretch reads MRYLKRVVLYRIVMVLSVFIIG. Cys-23 carries the N-palmitoyl cysteine lipid modification. The S-diacylglycerol cysteine moiety is linked to residue Cys-23.

This sequence belongs to the staphylococcal tandem lipoprotein family.

The protein resides in the cell membrane. This is an uncharacterized protein from Staphylococcus aureus (strain bovine RF122 / ET3-1).